We begin with the raw amino-acid sequence, 385 residues long: MNGRTLFFRRLFDYYKYQFKVLHAVIDWTVALYIVLPAIAFVIYQYIDLMNGRGLLYEWSEVAEWRWLYAVCVLIMFTGSIRTFLMEADKVFLLQKKEIIYQLKRYALLYSFLATLAKWLLLFFIVLPLISHSVLITFAESTALLCYLFGLHIFFLSLKQDRIRKPRSISRWIGDTLVRAILFAGSAILIVFTERHLLALFGILFLFFSVIRSLKKTASFTAFEAEVTEEKKSRLALAGLVMMMSQEAGMPKVKDRMRRKPLLYRNSKRIFKRRTICTGYKELFFKVMLRNGEYARQMYMLLSAFTVLIFVSPIWLKVIALLVYTGVCRYILTLIFDKVMDAPFLIGTDKESDEYYRARKSCINILHYAFAACCFLAAAVSLLFT.

Helical transmembrane passes span A24–Y44, W67–E87, Y106–P128, S133–F155, T176–T193, L197–L214, A304–Y324, and I365–T385.

The protein resides in the cell membrane. The sequence is that of Putative transporter YthQ (ythQ) from Bacillus subtilis (strain 168).